Reading from the N-terminus, the 358-residue chain is Ion-translocating oxidoreductase complex subunit D (358 aa).

4 consecutive transmembrane segments (helical) span residues 19-39, 41-61, 79-99, and 125-145; these read IMLW…YYFG, GVVL…FIAI, LTAL…VIII, and IGYV…MPPI. Thr-186 carries the post-translational modification FMN phosphoryl threonine. 5 consecutive transmembrane segments (helical) span residues 220–240, 248–268, 271–291, 297–317, and 321–341; these read FAQG…FLIL, IPVA…FTGF, LSAI…FIAT, SITP…VYLI, and GNYP…VPLI.

It belongs to the NqrB/RnfD family. In terms of assembly, the complex is composed of six subunits: RnfA, RnfB, RnfC, RnfD, RnfE and RnfG. It depends on FMN as a cofactor.

It is found in the cell inner membrane. In terms of biological role, part of a membrane-bound complex that couples electron transfer with translocation of ions across the membrane. This is Ion-translocating oxidoreductase complex subunit D from Haemophilus influenzae (strain PittGG).